Consider the following 312-residue polypeptide: tRNA pseudouridine synthase B (312 aa).

Asp-46 (nucleophile) is an active-site residue. Substrate contacts are provided by Tyr-74, Tyr-177, and Leu-198.

It belongs to the pseudouridine synthase TruB family. Type 1 subfamily.

The enzyme catalyses uridine(55) in tRNA = pseudouridine(55) in tRNA. Functionally, responsible for synthesis of pseudouridine from uracil-55 in the psi GC loop of transfer RNAs. The protein is tRNA pseudouridine synthase B of Buchnera aphidicola subsp. Schizaphis graminum (strain Sg).